A 160-amino-acid polypeptide reads, in one-letter code: Endoribonuclease YbeY (160 aa).

3 residues coordinate Zn(2+): His125, His129, and His135.

This sequence belongs to the endoribonuclease YbeY family. Zn(2+) serves as cofactor.

The protein localises to the cytoplasm. Its function is as follows. Single strand-specific metallo-endoribonuclease involved in late-stage 70S ribosome quality control and in maturation of the 3' terminus of the 16S rRNA. The chain is Endoribonuclease YbeY from Leuconostoc citreum (strain KM20).